The following is a 234-amino-acid chain: Eosinophil granule major basic protein 2 (234 aa).

A signal peptide spans Met-1–Ser-15. Positions Thr-16 to Lys-115 are cleaved as a propeptide — acidic. Positions Leu-26–Asp-96 are disordered. Residue Ser-69 is glycosylated (O-linked (Xyl...) (glycosaminoglycan) serine). Residues Ser-71–Pro-94 are compositionally biased toward acidic residues. In terms of domain architecture, C-type lectin spans Ser-133–Tyr-234. 2 disulfide bridges follow: Cys-135-Cys-232 and Cys-209-Cys-224.

Post-translationally, nitrated.

The protein resides in the cytoplasmic granule. In terms of biological role, MBP may play some important roles in the allergic reactions and inflammations, since MBP is capable of releasing histamine from mast cells and damaging the epithelial cells of bronchial tubes. Antiparasitic and antibiotic. This chain is Eosinophil granule major basic protein 2 (MBP2), found in Cavia porcellus (Guinea pig).